The sequence spans 334 residues: Methionine adenosyltransferase 2 subunit beta (334 aa).

Residues 37–40, 60–62, 71–72, Cys-93, Arg-97, Tyr-159, and Leu-185 contribute to the NADP(+) site; these read TGLL, YSR, and NL. The segment at 319–334 is required for interaction with MAT2A; sequence LWPFLVDKRWRQTVFH.

The protein belongs to the dTDP-4-dehydrorhamnose reductase family. MAT2B subfamily. As to quaternary structure, heterotrimer; composed of a catalytic mat2a homodimer that binds one regulatory mat2b chain. Heterohexamer; composed of a central, catalytic mat2a homotetramer flanked on either side by a regulatory mat2b chain. NADP binding increases the affinity for mat2a.

It participates in amino-acid biosynthesis; S-adenosyl-L-methionine biosynthesis; S-adenosyl-L-methionine from L-methionine: step 1/1. Regulatory subunit of S-adenosylmethionine synthetase 2, an enzyme that catalyzes the formation of S-adenosylmethionine from methionine and ATP. Regulates MAT2A catalytic activity by changing its kinetic properties, increasing its affinity for L-methionine. Can bind NADP (in vitro). This chain is Methionine adenosyltransferase 2 subunit beta (mat2b), found in Xenopus tropicalis (Western clawed frog).